A 901-amino-acid polypeptide reads, in one-letter code: Glutamate receptor 2.1 (901 aa).

The first 25 residues, Met-1–Ala-25, serve as a signal peptide directing secretion. Residues Gln-26 to Thr-574 are Extracellular-facing. N-linked (GlcNAc...) asparagine glycosylation is found at Asn-46, Asn-53, Asn-204, Asn-267, Asn-331, Asn-342, Asn-461, Asn-477, and Asn-536. The helical transmembrane segment at Leu-575–Leu-595 threads the bilayer. The Cytoplasmic portion of the chain corresponds to Glu-596–Asp-604. The chain crosses the membrane as a helical span at residues Gly-605–Ala-625. Topologically, residues Pro-626–Arg-629 are cytoplasmic. A helical transmembrane segment spans residues Val-630 to Thr-650. Residues Gln-651–Ser-823 lie on the Extracellular side of the membrane. A helical transmembrane segment spans residues Phe-824–Tyr-844. The Cytoplasmic segment spans residues Gln-845–Asn-901.

The protein belongs to the glutamate-gated ion channel (TC 1.A.10.1) family. In terms of assembly, may form heteromers. As to expression, expressed predominantly in roots. First strongly detected in all cell types of the root except at the apex. Later expressed at the root-shoot junction.

It is found in the membrane. In terms of biological role, glutamate-gated receptor that probably acts as a non-selective cation channel. May be involved in light-signal transduction and calcium homeostasis via the regulation of calcium influx into cells. The polypeptide is Glutamate receptor 2.1 (GLR2.1) (Arabidopsis thaliana (Mouse-ear cress)).